A 96-amino-acid polypeptide reads, in one-letter code: Aspartyl/glutamyl-tRNA(Asn/Gln) amidotransferase subunit C (96 aa).

Belongs to the GatC family. In terms of assembly, heterotrimer of A, B and C subunits.

The enzyme catalyses L-glutamyl-tRNA(Gln) + L-glutamine + ATP + H2O = L-glutaminyl-tRNA(Gln) + L-glutamate + ADP + phosphate + H(+). It carries out the reaction L-aspartyl-tRNA(Asn) + L-glutamine + ATP + H2O = L-asparaginyl-tRNA(Asn) + L-glutamate + ADP + phosphate + 2 H(+). In terms of biological role, allows the formation of correctly charged Asn-tRNA(Asn) or Gln-tRNA(Gln) through the transamidation of misacylated Asp-tRNA(Asn) or Glu-tRNA(Gln) in organisms which lack either or both of asparaginyl-tRNA or glutaminyl-tRNA synthetases. The reaction takes place in the presence of glutamine and ATP through an activated phospho-Asp-tRNA(Asn) or phospho-Glu-tRNA(Gln). The chain is Aspartyl/glutamyl-tRNA(Asn/Gln) amidotransferase subunit C from Neisseria gonorrhoeae (strain ATCC 700825 / FA 1090).